We begin with the raw amino-acid sequence, 398 residues long: O-methyltransferase mpaG (398 aa).

Asp264 provides a ligand contact to S-adenosyl-L-methionine. Catalysis depends on His306, which acts as the Proton acceptor. Residues Glu335 and Glu362 contribute to the active site.

The protein belongs to the class I-like SAM-binding methyltransferase superfamily. Cation-independent O-methyltransferase family. COMT subfamily.

The protein localises to the cytoplasm. It localises to the cytosol. It catalyses the reaction (4E,8E)-10-(4,6-dihydroxy-7-methyl-3-oxo-1,3-dihydro-2-benzofuran-5-yl)-4,8-dimethyldeca-4,8-dienoate + S-adenosyl-L-methionine = (4E,8E)-10-(4-hydroxy-6-methoxy-7-methyl-3-oxo-1,3-dihydro-2-benzofuran-5-yl)-4,8-dimethyldeca-4,8-dienoate + S-adenosyl-L-homocysteine + H(+). Its pathway is secondary metabolite biosynthesis; terpenoid biosynthesis. In terms of biological role, O-methyltransferase; part of the gene cluster that mediates the biosynthesis of mycophenolic acid (MPA), the first isolated antibiotic natural product in the world obtained from a culture of Penicillium brevicompactum in 1893. MpaC methylates farnesyl-DHMP-3C (FDHMP-3C) to yield MFDHMP-3C. The first step of the pathway is the synthesis of 5-methylorsellinic acid (5MOA) by the cytosolic polyketide synthase mpaC. 5MOA is then converted to the phthalide compound 5,7-dihydroxy-4,6-dimethylphthalide (DHMP) by the endoplasmic reticulum-bound cytochrome P450 monooxygenase mpaDE. MpaDE first catalyzes hydroxylation of 5-MOA to 4,6-dihydroxy-2-(hydroxymethyl)-3-methylbenzoic acid (DHMB). MpaDE then acts as a lactone synthase that catalyzes the ring closure to convert DHMB into DHMP. The next step is the prenylation of DHMP by the Golgi apparatus-associated prenyltransferase mpaA to yield farnesyl-DHMP (FDHMP). The ER-bound oxygenase mpaB then mediates the oxidative cleavage the C19-C20 double bond in FDHMP to yield FDHMP-3C via a mycophenolic aldehyde intermediate. The O-methyltransferase mpaG catalyzes the methylation of FDHMP-3C to yield MFDHMP-3C. After the cytosolic methylation of FDHMP-3C, MFDHMP-3C enters into peroxisomes probably via free diffusion due to its low molecular weight. Upon a peroxisomal CoA ligation reaction, catalyzed by a beta-oxidation component enzyme acyl-CoA ligase ACL891, MFDHMP-3C-CoA would then be restricted to peroxisomes for the following beta-oxidation pathway steps. The peroxisomal beta-oxidation machinery than converts MFDHMP-3C-CoA into MPA_CoA, via a beta-oxidation chain-shortening process. Finally mpaH acts as a peroxisomal acyl-CoA hydrolase with high substrate specificity toward MPA-CoA to release the final product MPA. The chain is O-methyltransferase mpaG from Penicillium roqueforti (strain FM164).